Consider the following 414-residue polypeptide: Esterase FrsA (414 aa).

Belongs to the FrsA family.

It carries out the reaction a carboxylic ester + H2O = an alcohol + a carboxylate + H(+). Its function is as follows. Catalyzes the hydrolysis of esters. The sequence is that of Esterase FrsA from Escherichia coli O6:K15:H31 (strain 536 / UPEC).